The following is a 221-amino-acid chain: Adenylate kinase (221 aa).

An ATP-binding site is contributed by 10–15; sequence GAGKGT. The interval 30–59 is NMP; that stretch reads STGDMLRAAVKAGTPLGLEAKRYMDAGELV. Residues threonine 31, arginine 36, 57–59, 85–88, and glutamine 92 contribute to the AMP site; these read ELV and GFPR. The LID stretch occupies residues 122-159; sequence GRRMHPASGRTYHVKFNPPKVEGVDDVTGEPLIQRDDD. Residues arginine 123 and 132–133 contribute to the ATP site; that span reads TY. Arginine 156 and arginine 167 together coordinate AMP. Glycine 207 lines the ATP pocket.

Belongs to the adenylate kinase family. As to quaternary structure, monomer.

Its subcellular location is the cytoplasm. It carries out the reaction AMP + ATP = 2 ADP. The protein operates within purine metabolism; AMP biosynthesis via salvage pathway; AMP from ADP: step 1/1. Functionally, catalyzes the reversible transfer of the terminal phosphate group between ATP and AMP. Plays an important role in cellular energy homeostasis and in adenine nucleotide metabolism. The chain is Adenylate kinase from Paraburkholderia phymatum (strain DSM 17167 / CIP 108236 / LMG 21445 / STM815) (Burkholderia phymatum).